The primary structure comprises 182 residues: RNA chaperone ProQ (182 aa).

The interval E125 to D160 is disordered.

This sequence belongs to the ProQ family.

The protein localises to the cytoplasm. In terms of biological role, RNA chaperone with significant RNA binding, RNA strand exchange and RNA duplexing activities. The protein is RNA chaperone ProQ of Haemophilus ducreyi (strain 35000HP / ATCC 700724).